The sequence spans 616 residues: UvrABC system protein C (616 aa).

Residues 12–97 (NDAGVYQYFD…IKQLKPKYNI (86 aa)) form the GIY-YIG domain. Residues 203-238 (TKLISKLNEKMLQYSNDFRFEEAMTLRDRIKTIEKS) enclose the UVR domain.

This sequence belongs to the UvrC family. As to quaternary structure, interacts with UvrB in an incision complex.

The protein resides in the cytoplasm. The UvrABC repair system catalyzes the recognition and processing of DNA lesions. UvrC both incises the 5' and 3' sides of the lesion. The N-terminal half is responsible for the 3' incision and the C-terminal half is responsible for the 5' incision. The polypeptide is UvrABC system protein C (Aliarcobacter butzleri (strain RM4018) (Arcobacter butzleri)).